A 745-amino-acid polypeptide reads, in one-letter code: Copper-exporting P-type ATPase B (745 aa).

The tract at residues 1–76 is disordered; that stretch reads MNNGIDPENE…GMDHSHMDHE (76 aa). Residues 1–108 lie on the Cytoplasmic side of the membrane; sequence MNNGIDPENE…HMGNFKQKFW (108 aa). Basic and acidic residues predominate over residues 36 to 76; the sequence is LQEHGKMENMDQHHTHGHMERHQQMDHGHMSGMDHSHMDHE. 3 tandem repeats follow at residues 60–71, 73–84, and 86–97. Residues 60-97 are 3 X 12 AA approximate repeats; the sequence is MDHGHMSGMDHSHMDHEDMSGMNHSHMGHENMSGMDHS. The chain crosses the membrane as a helical span at residues 109–128; the sequence is LSLILAIPIILFSPMMGMSF. Over 129–139 the chain is Extracellular; that stretch reads PFQVTFPGSNW. A helical membrane pass occupies residues 140 to 160; that stretch reads VVLVLATILFIYGGQPFLSGA. Over 161-170 the chain is Cytoplasmic; sequence KMELKQKSPA. A helical transmembrane segment spans residues 171-191; sequence MMTLIAMGITVAYVYSVYSFI. Residues 192-200 lie on the Extracellular side of the membrane; sequence ANLINPHTH. Residues 201–217 traverse the membrane as a helical segment; that stretch reads VMDFFWELATLIVIMLL. Topologically, residues 218–359 are cytoplasmic; the sequence is GHWIEMNAVS…EFLSDKVAKW (142 aa). A helical transmembrane segment spans residues 360 to 379; it reads LFYVALVVGIIAFIAWLFLA. Residues 380–388 lie on the Extracellular side of the membrane; sequence NLPDALERM. A helical membrane pass occupies residues 389–409; that stretch reads VTVFIIACPHALGLAIPLVVA. Residues 410-703 lie on the Cytoplasmic side of the membrane; the sequence is RSTSIAAKNG…QNLWWGAGYN (294 aa). The active-site 4-aspartylphosphate intermediate is Asp-440. The Mg(2+) site is built by Asp-638 and Asp-642. The helical transmembrane segment at 704-721 threads the bilayer; sequence IIAIPLAAGILAPIGLIL. Topologically, residues 722–723 are extracellular; the sequence is SP. Residues 724-744 traverse the membrane as a helical segment; that stretch reads AVGAVLMSLSTVVVALNALTL. Lys-745 is a topological domain (cytoplasmic).

Belongs to the cation transport ATPase (P-type) (TC 3.A.3) family. Type IB subfamily. Monomer.

It is found in the cell membrane. The enzyme catalyses Cu(+)(in) + ATP + H2O = Cu(+)(out) + ADP + phosphate + H(+). With respect to regulation, inhibited by vanadate. Involved in copper export. Can also export silver. This is Copper-exporting P-type ATPase B (copB) from Enterococcus hirae (strain ATCC 9790 / DSM 20160 / JCM 8729 / LMG 6399 / NBRC 3181 / NCIMB 6459 / NCDO 1258 / NCTC 12367 / WDCM 00089 / R).